A 416-amino-acid polypeptide reads, in one-letter code: Transmembrane protease serine 11B (416 aa).

At 1-17 (MYRHGISSQRSWPLWTT) the chain is on the cytoplasmic side. The helical; Signal-anchor for type II membrane protein transmembrane segment at 18–38 (IFIFLGVAAILGVTIGLLVHF) threads the bilayer. The Extracellular portion of the chain corresponds to 39-416 (LAVEKTYYYQ…RNWITSKTGL (378 aa)). Residues 43-160 (KTYYYQGDFH…ASIKLMEISK (118 aa)) enclose the SEA domain. N-linked (GlcNAc...) asparagine glycans are attached at residues asparagine 72 and asparagine 107. The 231-residue stretch at 185-415 (IVNGKSSLEG…YRNWITSKTG (231 aa)) folds into the Peptidase S1 domain. A disulfide bond links cysteine 210 and cysteine 226. Catalysis depends on charge relay system residues histidine 225 and aspartate 270. Residue asparagine 315 is glycosylated (N-linked (GlcNAc...) asparagine). Disulfide bonds link cysteine 335–cysteine 351 and cysteine 362–cysteine 391. Catalysis depends on serine 366, which acts as the Charge relay system.

This sequence belongs to the peptidase S1 family.

It localises to the cell membrane. With respect to regulation, inhibited by aprotinin, leupeptin, benzamidine, SERPINA1, SPINT1 and SPINT2. Its function is as follows. Serine protease. In Homo sapiens (Human), this protein is Transmembrane protease serine 11B (TMPRSS11B).